A 43-amino-acid polypeptide reads, in one-letter code: MSGIVEAISNAVKSGLDHDWVNMGTSIADVVAKGADFIAGFFS.

At methionine 1 the chain carries N-formylmethionine.

Belongs to the staphylococcal hemolytic protein family.

The protein resides in the secreted. In terms of biological role, virulence factor. Causes hemolysis of erythrocytes. Acts synergistically with beta-hemolysins from S.aureus ATCC 25923. Cytotoxic towards human dermal fibroblasts. This Staphylococcus ureilyticus (Staphylococcus cohnii subsp. urealyticus) protein is Hemolysin H1U.